A 1242-amino-acid polypeptide reads, in one-letter code: Structural polyprotein (1242 aa).

The tract at residues 14-101 (WRPRMPPRPW…PKRKPGRRER (88 aa)) is disordered. A compositionally biased stretch (low complexity) spans 26–42 (RMPTMQRPDQQARQMQQ). The interval 35-66 (QQARQMQQLIAAVSTLALRQNAAAPQRGKKKQ) is host transcription inhibition. A Nuclear localization signal motif is present at residues 59-96 (PQRGKKKQPRRKKPKPQPEKPKKQEQKPKQKKAPKRKP). Residues 61–73 (RGKKKQPRRKKPK) are compositionally biased toward basic residues. The span at 74-86 (PQPEKPKKQEQKP) shows a compositional bias: basic and acidic residues. Positions 82–111 (QEQKPKQKKAPKRKPGRRERMCMKIEHDCI) are binding to the viral RNA. Residues 87-98 (KQKKAPKRKPGR) show a composition bias toward basic residues. The segment at 96–110 (PGRRERMCMKIEHDC) is ribosome-binding. Cysteines 110 and 125 form a disulfide. One can recognise a Peptidase S3 domain in the interval 110–258 (CIFEVKHEGK…KITPEGTVEW (149 aa)). Residue histidine 136 is the Charge relay system of the active site. Residues 141-151 (IDNADLARLSY) carry the Nuclear export signal motif. Positions 152–157 (KKSSKY) are interaction with spike glycoprotein E2. Aspartate 158 functions as the Charge relay system in the catalytic mechanism. The segment at 180–190 (PEGHYNWHYGA) is dimerization of the capsid protein. Serine 210 (charge relay system) is an active-site residue. Residues 216-220 (DNKGP) are dimerization of the capsid protein. The segment at 259–272 (AASTVTAMCLLTNI) is functions as an uncleaved signal peptide for the precursor of protein E3/E2. 8 disulfide bridges follow: cysteine 267–cysteine 276, cysteine 281–cysteine 285, cysteine 284–cysteine 316, cysteine 343–cysteine 449, cysteine 346–cysteine 352, cysteine 415–cysteine 429, cysteine 477–cysteine 589, and cysteine 527–cysteine 544. An N-linked (GlcNAc...) asparagine; by host glycan is attached at asparagine 271. Residues 325–690 (STANHFNAYK…YYYGLHPTTT (366 aa)) are Extracellular-facing. Interaction with host Mxra8 receptor stretches follow at residues 350–353 (HSCH) and 386–388 (HDH). Interaction with host Mxra8 receptor stretches follow at residues 508–511 (QSGN) and 540–546 (TINSCTV). A glycan (N-linked (GlcNAc...) asparagine; by host) is linked at asparagine 586. Residues 691-711 (IVVVIRVSVVVLLSFAASVYM) traverse the membrane as a helical segment. Topologically, residues 712-746 (CVVARTKCLTPYALTPGAVVPVTIGVLCCAPKAHA) are cytoplasmic. The interaction with the capsid protein stretch occupies residues 714–718 (VARTK). S-palmitoyl cysteine; by host attachment occurs at residues cysteine 719, cysteine 739, and cysteine 740. The tract at residues 719–739 (CLTPYALTPGAVVPVTIGVLC) is transient transmembrane before p62-6K protein processing. Cysteines 719 and 740 form a disulfide. At 747-761 (ASFAEGMAYLWDNNQ) the chain is on the extracellular side. Residue asparagine 760 is glycosylated (N-linked (GlcNAc...) asparagine; by host). Residues 762–782 (SMFWMELTGPLALLILATCCA) traverse the membrane as a helical segment. Residues 783-785 (RSL) are Cytoplasmic-facing. A helical membrane pass occupies residues 786–806 (LSCCKGSFLVAMSIGSAVASA). Residues 807–1217 (YEHTAIIPNQ…STAMTWAQHL (411 aa)) are Extracellular-facing. 4 disulfide bridges follow: cysteine 855/cysteine 920, cysteine 868/cysteine 900, cysteine 869/cysteine 902, and cysteine 874/cysteine 884. The tract at residues 890–907 (VYPFMWGGAYCFCDSENT) is E1 fusion peptide loop. N-linked (GlcNAc...) asparagine; by host glycans are attached at residues asparagine 947 and asparagine 1076. Intrachain disulfides connect cysteine 1065–cysteine 1077, cysteine 1107–cysteine 1180, cysteine 1112–cysteine 1184, and cysteine 1134–cysteine 1174. A helical transmembrane segment spans residues 1218-1238 (AGGVGLLIALAVLILVIVTCV). Cysteine 1237 is lipidated: S-palmitoyl cysteine; by host. The Cytoplasmic segment spans residues 1239–1242 (TLRR).

In terms of assembly, homodimer. Homomultimer. Interacts with host karyopherin KPNA4; this interaction allows the nuclear import of the viral capsid protein. Interacts with spike glycoprotein E2. Interacts with host IRAK1; the interaction leads to inhibition of IRAK1-dependent signaling. The precursor of protein E3/E2 and E1 form a heterodimer shortly after synthesis. As to quaternary structure, the precursor of protein E3/E2 and E1 form a heterodimer shortly after synthesis. Processing of the precursor of protein E3/E2 into E2 and E3 results in a heterodimer of the spike glycoproteins E2 and E1. Spike at virion surface are constituted of a trimer of E2-E1 heterodimers. After target cell attachment and endocytosis, E1 change conformation to form homotrimers. Interacts with 6K protein. In terms of assembly, interacts with spike glycoprotein E1. Processing of the precursor of protein E3/E2 into E2 and E3 results in a heterodimer of the spike glycoproteins E2 and E1. Spike at virion surface are constituted of a trimer of E2-E1 heterodimers. Interacts with 6K protein. Interacts with host MXRA8; this interaction mediates virus entry. Oligomer. Interacts with spike glycoprotein E1. Interacts with spike glycoprotein E2. Structural polyprotein: Specific enzymatic cleavages in vivo yield mature proteins. Capsid protein is auto-cleaved during polyprotein translation, unmasking a signal peptide at the N-terminus of the precursor of E3/E2. The remaining polyprotein is then targeted to the host endoplasmic reticulum, where host signal peptidase cleaves it into pE2, 6K and E1 proteins. pE2 is further processed to mature E3 and E2 by host furin in trans-Golgi vesicle. In terms of processing, palmitoylated via thioester bonds. These palmitoylations may induce disruption of the C-terminus transmembrane. This would result in the reorientation of E2 C-terminus from lumenal to cytoplasmic side. Post-translationally, N-glycosylated. Palmitoylated via thioester bonds.

The protein resides in the virion. Its subcellular location is the host cytoplasm. It is found in the host cell membrane. It localises to the host nucleus. The protein localises to the virion membrane. The protein resides in the host Golgi apparatus. Its subcellular location is the host trans-Golgi network. It is found in the host endoplasmic reticulum. It carries out the reaction Autocatalytic release of the core protein from the N-terminus of the togavirus structural polyprotein by hydrolysis of a -Trp-|-Ser- bond.. Forms an icosahedral capsid with a T=4 symmetry composed of 240 copies of the capsid protein surrounded by a lipid membrane through which penetrate 80 spikes composed of trimers of E1-E2 heterodimers. The capsid protein binds to the viral RNA genome at a site adjacent to a ribosome binding site for viral genome translation following genome release. Possesses a protease activity that results in its autocatalytic cleavage from the nascent structural protein. Following its self-cleavage, the capsid protein transiently associates with ribosomes, and within several minutes the protein binds to viral RNA and rapidly assembles into icosahedric core particles. The resulting nucleocapsid eventually associates with the cytoplasmic domain of the spike glycoprotein E2 at the cell membrane, leading to budding and formation of mature virions. In case of infection, new virions attach to target cells and after clathrin-mediated endocytosis their membrane fuses with the host endosomal membrane. This leads to the release of the nucleocapsid into the cytoplasm, followed by an uncoating event necessary for the genomic RNA to become accessible. The uncoating might be triggered by the interaction of capsid proteins with ribosomes. Binding of ribosomes would release the genomic RNA since the same region is genomic RNA-binding and ribosome-binding. Specifically inhibits interleukin-1 receptor-associated kinase 1/IRAK1-dependent signaling during viral entry, representing a means by which the alphaviruses may evade innate immune detection and activation prior to viral gene expression. Functionally, provides the signal sequence for the translocation of the precursor of protein E3/E2 to the host endoplasmic reticulum. Furin-cleaved E3 remains associated with spike glycoprotein E1 and mediates pH protection of the latter during the transport via the secretory pathway. After virion release from the host cell, the assembly protein E3 is gradually released in the extracellular space. In terms of biological role, plays a role in viral attachment to target host cell, by binding to the cell receptor MXRA8. Synthesized as a p62 precursor which is processed by furin at the cell membrane just before virion budding, giving rise to E2-E1 heterodimer. The p62-E1 heterodimer is stable, whereas E2-E1 is unstable and dissociate at low pH. p62 is processed at the last step, presumably to avoid E1 fusion activation before its final export to cell surface. E2 C-terminus contains a transitory transmembrane that would be disrupted by palmitoylation, resulting in reorientation of the C-terminal tail from lumenal to cytoplasmic side. This step is critical since E2 C-terminus is involved in budding by interacting with capsid proteins. This release of E2 C-terminus in cytoplasm occurs lately in protein export, and precludes premature assembly of particles at the endoplasmic reticulum membrane. Its function is as follows. Acts as a viroporin that participates in virus glycoprotein processing and transport to the plasma membrane, cell permeabilization and budding of viral particles. Disrupts the calcium homeostasis of the cell, probably at the endoplasmic reticulum level. This leads to cytoplasmic calcium elevation. Because of its lipophilic properties, the 6K protein is postulated to influence the selection of lipids that interact with the transmembrane domains of the glycoproteins, which, in turn, affects the deformability of the bilayer required for the extreme curvature that occurs as budding proceeds. Present in low amount in virions, about 3% compared to viral glycoproteins. Class II viral fusion protein. Fusion activity is inactive as long as E1 is bound to E2 in mature virion. After virus attachment to target cell via host MXRA8 and endocytosis, acidification of the endosome induce dissociation of E1/E2 heterodimer and concomitant trimerization of the E1 subunits. This E1 trimer is fusion active, and promotes release of viral nucleocapsid in cytoplasm after endosome and viral membrane fusion. Efficient fusion requires the presence of cholesterol and sphingolipid in the target membrane. This is Structural polyprotein from Mayaro virus (strain Brazil) (MAYV).